A 129-amino-acid polypeptide reads, in one-letter code: UPF0344 protein SAR0931 (129 aa).

A run of 4 helical transmembrane segments spans residues 1–21, 36–56, 67–87, and 99–119; these read MLHLHILSWVLAIILFIATYL, LHMVLRLFMLLTLISGFWILI, MLLTLKMLCGVAVVGLMEVSI, and MFWITIALIIITMVLGVILPL.

The protein belongs to the UPF0344 family.

It is found in the cell membrane. This is UPF0344 protein SAR0931 from Staphylococcus aureus (strain MRSA252).